We begin with the raw amino-acid sequence, 234 residues long: Putative lipoyltransferase 2, mitochondrial (234 aa).

The N-terminal 28 residues, 1-28, are a transit peptide targeting the mitochondrion; that stretch reads MPFVRPLVTVVRAGRHSYSAGLQLQQRL. The region spanning 39–220 is the BPL/LPL catalytic domain; that stretch reads AEFRNYLVLQ…SFAKVFECRL (182 aa). Substrate-binding positions include 83 to 90, 150 to 152, and 163 to 165; these read RGGLITFH, AIG, and GIG. C181 (acyl-thioester intermediate) is an active-site residue.

This sequence belongs to the LipB family.

It localises to the mitochondrion. The catalysed reaction is octanoyl-[ACP] + L-lysyl-[protein] = N(6)-octanoyl-L-lysyl-[protein] + holo-[ACP] + H(+). It participates in protein modification; protein lipoylation via endogenous pathway; protein N(6)-(lipoyl)lysine from octanoyl-[acyl-carrier-protein]: step 1/2. In terms of biological role, catalyzes the transfer of endogenously produced octanoic acid from octanoyl-acyl-carrier-protein onto the lipoyl domains of lipoate-dependent enzymes. Lipoyl-ACP can also act as a substrate although octanoyl-ACP is likely to be the physiological substrate. The polypeptide is Putative lipoyltransferase 2, mitochondrial (Drosophila melanogaster (Fruit fly)).